Reading from the N-terminus, the 260-residue chain is MIIVLSPAKSLDYDTPAHVPSYTKPAFVDDASELIDGLRKLSPQDIATLMDISDPLARLNFQRYADWSPTFSPANAKQAVLAFNGDVYEGFDAKSLSAADLDYAQQHVRVLSGLYGLLRPLDLLQPYRLEMGTRFANARGKDLYAFWGDRITRALNEQLETRSGAARVLVNCASTEYFKSVKPKLLAAPVVTPVFEDWKGGRYKIISFHAKRARGLMARYIVENRIAEPAALKDFAMEDYVFDAAASNDSTYVYRRRIGE.

It belongs to the UPF0246 family.

This chain is UPF0246 protein BamMC406_2140, found in Burkholderia ambifaria (strain MC40-6).